The sequence spans 1128 residues: MSRGAMQPSQQKLAEKLTILNDRGIGMLTRIYNIKKACGDPKAKPSYLIDKNLESAVKFIVRKFPAVETRNNNQQLAQLQKEKSEILKNLALYYFTFVDVMEFKDHVCELLNTIDACQVFFDITVNFDLTKNYLDLVVTYTTLMLLLSRIEERKAIIGLYNYAHEMTHGSSDREYPRLGQMIVDYENPLKKMMEEFVPHGKSLSDALVSLQMVYPRRNLSADQWRNAQLLSLISAPSTMLNPAQSDTMPCEYLSLDTMEKWIVFGFILCHAALNSDPAALSLWKLALQSSTCLCLFRDEVFHIHKAAEDLFVNIRGYNKRVNDIRECKESALSHAGSMHRERRKFLRSALKELATVLADQPGLLGPKALFVFMALSFARDEIIWLLRHADNIQKKSTDDFIDKHIAELIFYMEELRAHVRKYGPVMQRYYVQYLSGFDAVVLNELVQNLSVCPEDESIIMSSFVNTMTSLSVKQVEDGEVFDFRGMRLDWFRLQAYTSVSKASLGLADHRELGKMMNTIIFHTKMVDSLVEMLVETSDLSIFCFYSRAFEKMFQQCLELPSQSRYSISFPLLCTHFMSCTHELCPEERHHIGDRSLSLCNMFLDEMAKQARNLITDICTEQCTLSDQLLPKHCAKTISQAVNKKSKKQTGKKGEPEREKPGVESMRKNRLLVTNLDKLHTALSELCFSINYVPNMMVWEHTFTPREYLTSHLEIRFTKSIVGMTMYNQTTQEIAKPSELLTSVRAYMTVLQSIENYVQIDITRVFNNVLLQQTQHLDSHGEPTITSLYTNWYLETLLRQVSNGHIAYFPAMKAFVNLPTENELTFNAEEYSDISEMRSLSELLGPYGMKFLSESLMWHISSQVAELKKLVVDNVEVLTQMRTSFDKPDHMAALFKRLTSVDSVLKRMTIIGVILSFRSLAQEALRDVLSCHIPFLVSSVEDFKDHIPRETDMKVAMNVYELSSAAGLPCEIDPALVVALSSQKSENISPEEEYKIACLLMVFVAVSMPTLASNVMSQYSPAIEGHCNNIHCLAKAINQIAAALFTIHKGSIEDRLKEFLALASSSLLKIGQETDKTTTRNRESVYLLLDMIVQESPFLTMDLLESCFPYVLLRNAYHAVYKQSVSSSA.

The tract at residues 640–665 (AVNKKSKKQTGKKGEPEREKPGVESM) is disordered. The segment covering 651–665 (KKGEPEREKPGVESM) has biased composition (basic and acidic residues). The helical transmembrane segment at 995–1015 (IACLLMVFVAVSMPTLASNVM) threads the bilayer.

The protein belongs to the HEM-1/HEM-2 family.

The protein localises to the cell membrane. It is found in the cell projection. It localises to the lamellipodium membrane. Its function is as follows. Part of the WAVE complex that regulates lamellipodia formation. The WAVE complex regulates actin filament reorganization via its interaction with the Arp2/3 complex. Actin remodeling activity is regulated by RAC1. Plays a role in neural tube closure. In Danio rerio (Zebrafish), this protein is Nck-associated protein 1 (nckap1).